The following is a 118-amino-acid chain: ATP synthase subunit g, mitochondrial (118 aa).

In terms of assembly, F-type ATP synthases have 2 components, the catalytic core F(1) and the membrane-embedded component F(0), linked together by a central stalk and a peripheral stalk. The central stalk, also called rotor shaft, is often seen as part of F(1). The peripheral stalk is seen as part of F(0). F(0) contains the membrane channel next to the rotor. F-type ATP synthases form dimers but each monomer functions independently in ATP generation. The dimer consists of 18 different polypeptides: ATP1 (subunit alpha, part of F(1), 3 molecules per monomer), ATP2 (subunit beta, part of F(1), 3 molecules per monomer), ATP3 (subunit gamma, part of the central stalk), ATP4 (subunit b, part of the peripheral stalk), ATP5/OSCP (subunit 5/OSCP, part of the peripheral stalk), ATP6 (subunit a, part of the peripheral stalk), ATP7 (subunit d, part of the peripheral stalk), ATP8 (subunit 8, part of the peripheral stalk), OLI1 (subunit c, part of the rotor, 10 molecules per monomer), ATP14 (subunit h, part of the peripheral stalk), ATP15 (subunit epsilon, part of the central stalk), ATP16 (subunit delta, part of the central stalk), ATP17 (subunit f, part of the peripheral stalk), ATP18 (subunit i/j, part of the peripheral stalk). Dimer-specific subunits are ATP19 (subunit k, at interface between monomers), ATP20 (subunit g, at interface between monomers), TIM11 (subunit e, at interface between monomers). Also contains subunit L.

Its subcellular location is the mitochondrion inner membrane. Its function is as follows. Mitochondrial membrane ATP synthase (F(1)F(0) ATP synthase or Complex V) produces ATP from ADP in the presence of a proton gradient across the membrane which is generated by electron transport complexes of the respiratory chain. F-type ATP synthases consist of two structural domains, F(1) - containing the extramembraneous catalytic core, and F(0) - containing the membrane proton channel, linked together by a central stalk and a peripheral stalk. During catalysis, ATP synthesis in the catalytic domain of F(1) is coupled via a rotary mechanism of the central stalk subunits to proton translocation. Part of the complex F(0) domain Minor subunit located with subunit a/ATP6 in the membrane. Together with subunit e/TIM11, probably contributes to membrane curvature at the site of the ATP synthase dimer, ultimately contributing to formation of cristae. This chain is ATP synthase subunit g, mitochondrial, found in Pichia angusta (Yeast).